The primary structure comprises 31 residues: Antifungal protein 1 (31 aa).

Basic and acidic residues-rich tracts occupy residues 1–10 (PGAGSQEERM) and 18–31 (DFSH…MVRE). The segment at 1–31 (PGAGSQEERMQGQMEGQDFSHEERFLSMVRE) is disordered.

As to quaternary structure, heterodimer; disulfide-linked. Post-translationally, disulfide bonds.

Functionally, has antifungal activity against C.gloeosporioides but not against B.cinerea and Fusarium sp. or against various yeasts. Has no antibacterial activity. This Passiflora alata (Winged-stem passion flower) protein is Antifungal protein 1.